The sequence spans 163 residues: Cyclic pyranopterin monophosphate synthase (163 aa).

Substrate is bound by residues 75–77 (LCH) and 113–114 (ME). The active site involves D128.

The protein belongs to the MoaC family. As to quaternary structure, homohexamer; trimer of dimers.

It catalyses the reaction (8S)-3',8-cyclo-7,8-dihydroguanosine 5'-triphosphate = cyclic pyranopterin phosphate + diphosphate. It participates in cofactor biosynthesis; molybdopterin biosynthesis. Functionally, catalyzes the conversion of (8S)-3',8-cyclo-7,8-dihydroguanosine 5'-triphosphate to cyclic pyranopterin monophosphate (cPMP). In Magnetococcus marinus (strain ATCC BAA-1437 / JCM 17883 / MC-1), this protein is Cyclic pyranopterin monophosphate synthase.